We begin with the raw amino-acid sequence, 280 residues long: ATP synthase subunit a (280 aa).

Helical transmembrane passes span 45–65 (AINVDSMLFSIGLGVLFLFLF), 105–125 (LVAPLALTVFMWVFLMNLMDL), 126–146 (LPVDWLPYVATMAGIPYLKVV), 159–179 (LSIFFLVLYYSVKMKGAGGFF), 190–210 (FLFPVNLLLEGVGLIAKPISL), 223–243 (MIFILIALMFGGGWVLALFGG), and 250–270 (AVFHILIITLQAFIFMTLTIV).

This sequence belongs to the ATPase A chain family. In terms of assembly, F-type ATPases have 2 components, CF(1) - the catalytic core - and CF(0) - the membrane proton channel. CF(1) has five subunits: alpha(3), beta(3), gamma(1), delta(1), epsilon(1). CF(0) has three main subunits: a(1), b(2) and c(9-12). The alpha and beta chains form an alternating ring which encloses part of the gamma chain. CF(1) is attached to CF(0) by a central stalk formed by the gamma and epsilon chains, while a peripheral stalk is formed by the delta and b chains.

The protein localises to the cell inner membrane. Functionally, key component of the proton channel; it plays a direct role in the translocation of protons across the membrane. This Thiobacillus denitrificans (strain ATCC 25259 / T1) protein is ATP synthase subunit a.